Consider the following 312-residue polypeptide: 2,3-dihydroxyphenylpropionate/2,3-dihydroxicinnamic acid 1,2-dioxygenase (312 aa).

His-115 acts as the Proton donor in catalysis. His-179 (proton acceptor) is an active-site residue.

This sequence belongs to the LigB/MhpB extradiol dioxygenase family. Homotetramer. Requires Fe(2+) as cofactor.

It carries out the reaction 3-(2,3-dihydroxyphenyl)propanoate + O2 = (2Z,4E)-2-hydroxy-6-oxonona-2,4-dienedioate + H(+). It catalyses the reaction (2E)-3-(2,3-dihydroxyphenyl)prop-2-enoate + O2 = (2Z,4E,7E)-2-hydroxy-6-oxonona-2,4,7-trienedioate + H(+). Its pathway is aromatic compound metabolism; 3-phenylpropanoate degradation. Functionally, catalyzes the non-heme iron(II)-dependent oxidative cleavage of 2,3-dihydroxyphenylpropionic acid and 2,3-dihydroxicinnamic acid into 2-hydroxy-6-ketononadienedioate and 2-hydroxy-6-ketononatrienedioate, respectively. The sequence is that of 2,3-dihydroxyphenylpropionate/2,3-dihydroxicinnamic acid 1,2-dioxygenase from Azotobacter vinelandii (strain DJ / ATCC BAA-1303).